Reading from the N-terminus, the 362-residue chain is Aminomethyltransferase (362 aa).

The protein belongs to the GcvT family. In terms of assembly, the glycine cleavage system is composed of four proteins: P, T, L and H.

It carries out the reaction N(6)-[(R)-S(8)-aminomethyldihydrolipoyl]-L-lysyl-[protein] + (6S)-5,6,7,8-tetrahydrofolate = N(6)-[(R)-dihydrolipoyl]-L-lysyl-[protein] + (6R)-5,10-methylene-5,6,7,8-tetrahydrofolate + NH4(+). Functionally, the glycine cleavage system catalyzes the degradation of glycine. This Colwellia psychrerythraea (strain 34H / ATCC BAA-681) (Vibrio psychroerythus) protein is Aminomethyltransferase.